The primary structure comprises 873 residues: Bifunctional heparan sulfate N-deacetylase/N-sulfotransferase 3 (873 aa).

Over 1–13 (MSFIMKPHRHFQR) the chain is Cytoplasmic. A helical; Signal-anchor for type II membrane protein membrane pass occupies residues 14–34 (TLILLATFCMVSIIISAYYLY). Over 35–873 (SGYKQESEVS…WLRQELQKVR (839 aa)) the chain is Lumenal. The interval 36-589 (GYKQESEVSG…KRHRDIWSKE (554 aa)) is heparan sulfate N-deacetylase 3. N-linked (GlcNAc...) asparagine glycosylation is found at asparagine 146, asparagine 226, asparagine 342, and asparagine 392. The interval 590-873 (KTCDRLPKFL…WLRQELQKVR (284 aa)) is heparan sulfate N-sulfotransferase 3. Catalysis depends on lysine 605, which acts as the For sulfotransferase activity. 605-609 (KTGTT) contacts 3'-phosphoadenylyl sulfate. Asparagine 658 carries an N-linked (GlcNAc...) asparagine glycan. Serine 703 contributes to the 3'-phosphoadenylyl sulfate binding site. Asparagine 794 carries an N-linked (GlcNAc...) asparagine glycan. Cysteine 809 and cysteine 819 are oxidised to a cystine. Residue 824–828 (KGRKY) participates in 3'-phosphoadenylyl sulfate binding.

Belongs to the sulfotransferase 1 family. NDST subfamily. In terms of assembly, monomer. Strongly expressed strongly in brain. Expressed at high level at embryonic day 11 compared to other stages of development. Weakly expressed in adult heart, kidney, muscle, endothelial cells and testis but not in other tissues.

The protein resides in the golgi apparatus membrane. It carries out the reaction alpha-D-glucosaminyl-[heparan sulfate](n) + 3'-phosphoadenylyl sulfate = N-sulfo-alpha-D-glucosaminyl-[heparan sulfate](n) + adenosine 3',5'-bisphosphate + 2 H(+). It participates in glycan metabolism; heparan sulfate biosynthesis. Its pathway is glycan metabolism; heparin biosynthesis. Its function is as follows. Essential bifunctional enzyme that catalyzes both the N-deacetylation and the N-sulfation of glucosamine (GlcNAc) of the glycosaminoglycan in heparan sulfate. Modifies the GlcNAc-GlcA disaccharide repeating sugar backbone to make N-sulfated heparosan, a prerequisite substrate for later modifications in heparin biosynthesis. Has high deacetylase activity but low sulfotransferase activity. In Mus musculus (Mouse), this protein is Bifunctional heparan sulfate N-deacetylase/N-sulfotransferase 3 (Ndst3).